Reading from the N-terminus, the 130-residue chain is UPF0102 protein RSc3265 (130 aa).

The protein belongs to the UPF0102 family.

This chain is UPF0102 protein RSc3265, found in Ralstonia nicotianae (strain ATCC BAA-1114 / GMI1000) (Ralstonia solanacearum).